Reading from the N-terminus, the 194-residue chain is Small ribosomal subunit protein uS4c (194 aa).

Residues 13-36 (GLTSKRPRSGSDPKNQLRSGKKSQ) form a disordered region. The 62-residue stretch at 82–143 (MRLDNILFRL…KQRSKALIQN (62 aa)) folds into the S4 RNA-binding domain.

This sequence belongs to the universal ribosomal protein uS4 family. Part of the 30S ribosomal subunit. Contacts protein S5. The interaction surface between S4 and S5 is involved in control of translational fidelity.

Its subcellular location is the plastid. The protein resides in the chloroplast. Functionally, one of the primary rRNA binding proteins, it binds directly to 16S rRNA where it nucleates assembly of the body of the 30S subunit. Its function is as follows. With S5 and S12 plays an important role in translational accuracy. This chain is Small ribosomal subunit protein uS4c (rps4), found in Moraea spathulata (Large yellow moraea).